The chain runs to 519 residues: Probable WRKY transcription factor 33 (519 aa).

2 disordered regions span residues methionine 1–serine 34 and serine 123–proline 212. Residues threonine 7–serine 34 show a composition bias toward polar residues. The segment covering threonine 130 to threonine 142 has biased composition (low complexity). Polar residues predominate over residues threonine 164–serine 174. Basic and acidic residues predominate over residues arginine 178–asparagine 188. The segment at residues arginine 178–proline 242 is a DNA-binding region (WRKY 1). 4 residues coordinate Zn(2+): cysteine 209, cysteine 214, histidine 237, and histidine 239. Disordered stretches follow at residues valine 232–phenylalanine 255 and asparagine 267–arginine 349. Residues threonine 245–threonine 254 show a composition bias toward low complexity. Over residues glutamine 269–serine 299 the composition is skewed to polar residues. Basic and acidic residues predominate over residues proline 323–asparagine 332. Residues serine 356 to proline 421 constitute a DNA-binding region (WRKY 2). Residues cysteine 387, cysteine 392, histidine 416, and histidine 418 each contribute to the Zn(2+) site.

It belongs to the WRKY group I family. Interacts with MKS1. Interacts with ATG18A. Interacts with SIB1 and SIB2. Interacts with VQ1 and VQ10. Post-translationally, phosphorylated by MPK4. Phosphorylated on serine residues by MPK3 and MPK6 following infection with the necrotrophic fungal pathogen B.cinerea. In terms of tissue distribution, highly expressed in roots, leaves and flowers, and at lower levels in stems, siliques and seeds.

The protein localises to the nucleus. Its function is as follows. Transcription factor. Interacts specifically with the W box (5'-TTGAC[CT]-3'), a frequently occurring elicitor-responsive cis-acting element. Involved in defense responses. Required for resistance to the necrotrophic fungal pathogen B.cinerea. Regulates the antagonistic relationship between defense pathways mediating responses to the bacterial pathogen P. syringae and the necrotrophic pathogen B.cinerea. Required for the phytoalexin camalexin synthesis following infection with B.cinerea. Acts as a positive regulator of the camalexin biosynthetic genes PAD3 (CYP71B15) and CYP71A13 by binding to their promoters. Acts downstream of MPK3 and MPK6 in reprogramming the expression of camalexin biosynthetic genes, which drives the metabolic flow to camalexin production. Functions with WRKY25 as positive regulator of salt stress response and abscisic acid (ABA) signaling. Functions with WRKY25 and WRKY26 as positive regulator of plant thermotolerance by partially participating in ethylene-response signal transduction pathway. The DNA-binding activity of WRKY33 is increased by SIB1 and SIB2. This Arabidopsis thaliana (Mouse-ear cress) protein is Probable WRKY transcription factor 33 (WRKY33).